The primary structure comprises 158 residues: Protein FAM177B (158 aa).

Positions Glu-36–Glu-48 are enriched in acidic residues. Residues Glu-36–Ser-59 form a disordered region.

The protein belongs to the FAM177 family.

The protein is Protein FAM177B (FAM177B) of Homo sapiens (Human).